The chain runs to 164 residues: MELADKASFRDAMAHVGAAVNIITTDGPAGRAGFTASAVCSVTDTPPTLLVCLNRSASVWPVFSEHHTLCVNTLAAGQEALSTLFGGKTAMDERFAAADWQTGATGCPRLEAALVSFDCRIDQRVSVGTHDILFCHVVAITRHPEPRGLMWFDRGYHTLMRPAC.

The protein belongs to the non-flavoprotein flavin reductase family. RutF subfamily.

It carries out the reaction FMNH2 + NAD(+) = FMN + NADH + 2 H(+). Its function is as follows. Catalyzes the reduction of FMN to FMNH2 which is used to reduce pyrimidine by RutA via the Rut pathway. The protein is FMN reductase (NADH) RutF of Klebsiella variicola (strain At-22).